Here is a 381-residue protein sequence, read N- to C-terminus: Chymosin (381 aa).

The first 16 residues, methionine 1–alanine 16, serve as a signal peptide directing secretion. Positions serine 17 to leucine 58 are cleaved as a propeptide — activation peptide. A Peptidase A1 domain is found at tyrosine 74–alanine 378. Aspartate 92 is an active-site residue. Cysteine 105 and cysteine 110 are oxidised to a cystine. Asparagine 158 carries an N-linked (GlcNAc...) asparagine glycan. The cysteines at positions 265 and 269 are disulfide-linked. Aspartate 274 is a catalytic residue. Cysteine 308 and cysteine 341 are joined by a disulfide. N-linked (GlcNAc...) asparagine glycosylation occurs at asparagine 349.

Belongs to the peptidase A1 family.

It catalyses the reaction Broad specificity similar to that of pepsin A. Clots milk by cleavage of a single 104-Ser-Phe-|-Met-Ala-107 bond in kappa-chain of casein.. In terms of biological role, chymosin is synthesized in the mucosa of the abomasum (fourth stomach) of young (unweaned) ruminants. The enzyme hydrolyzes casein to paracasein. The sequence is that of Chymosin from Camelus dromedarius (Dromedary).